The sequence spans 412 residues: DnaJ homolog subfamily A member 2 (412 aa).

The 63-residue stretch at 8–70 (KLYDILGVPP…EKRELYDRYG (63 aa)) folds into the J domain. Lys39 carries the post-translational modification N6-acetyllysine. 2 positions are modified to phosphoserine: Ser78 and Ser123. The CR-type zinc-finger motif lies at 130–214 (GKTTKLQLSK…CEGKKVIKEV (85 aa)). Lys134 participates in a covalent cross-link: Glycyl lysine isopeptide (Lys-Gly) (interchain with G-Cter in SUMO2). Zn(2+) is bound by residues Cys143 and Cys146. One copy of the CXXCXGXG motif repeat lies at 143–150 (CSACSGQG). Residue Lys152 is modified to N6-acetyllysine. Cys159, Cys162, Cys186, Cys189, Cys202, and Cys205 together coordinate Zn(2+). CXXCXGXG motif repeat units follow at residues 159-166 (CSACRGRG), 186-193 (CSDCNGEG), and 202-209 (CKKCEGKK). The tract at residues 365–412 (IGETEEVELQEFDSTRGSGGGQRREAYNDSSDEESSSHHGPGVQCAHQ) is disordered. Tyr391 carries the post-translational modification Phosphotyrosine. A phosphoserine mark is found at Ser394 and Ser395. Cys409 bears the Cysteine methyl ester mark. A lipid anchor (S-farnesyl cysteine) is attached at Cys409. Residues 410-412 (AHQ) constitute a propeptide, removed in mature form.

It localises to the membrane. Its function is as follows. Co-chaperone of Hsc70. Stimulates ATP hydrolysis and the folding of unfolded proteins mediated by HSPA1A/B (in vitro). The polypeptide is DnaJ homolog subfamily A member 2 (Dnaja2) (Mus musculus (Mouse)).